A 631-amino-acid polypeptide reads, in one-letter code: 1-deoxy-D-xylulose-5-phosphate synthase (631 aa).

Residues histidine 87 and 128-130 (GHS) contribute to the thiamine diphosphate site. Aspartate 159 provides a ligand contact to Mg(2+). Thiamine diphosphate-binding positions include 160–161 (GA), asparagine 188, phenylalanine 295, and glutamate 377. Mg(2+) is bound at residue asparagine 188.

Belongs to the transketolase family. DXPS subfamily. As to quaternary structure, homodimer. Mg(2+) is required as a cofactor. The cofactor is thiamine diphosphate.

The enzyme catalyses D-glyceraldehyde 3-phosphate + pyruvate + H(+) = 1-deoxy-D-xylulose 5-phosphate + CO2. Its pathway is metabolic intermediate biosynthesis; 1-deoxy-D-xylulose 5-phosphate biosynthesis; 1-deoxy-D-xylulose 5-phosphate from D-glyceraldehyde 3-phosphate and pyruvate: step 1/1. Functionally, catalyzes the acyloin condensation reaction between C atoms 2 and 3 of pyruvate and glyceraldehyde 3-phosphate to yield 1-deoxy-D-xylulose-5-phosphate (DXP). The chain is 1-deoxy-D-xylulose-5-phosphate synthase from Pseudomonas entomophila (strain L48).